The primary structure comprises 800 residues: Internalin A (800 aa).

Residues 1 to 35 form the signal peptide; that stretch reads MRKKRYVWLKSILVAILVFGSGVWINTSNGTNAQA. Residues 36–76 enclose the LRRNT domain; that stretch reads ATITQDTPINQIFTDTALAEKMKTVLGKTNVTDTVSQTDLD. 15 LRR repeats span residues 77-98, 99-120, 121-142, 143-164, 165-186, 187-207, 208-229, 230-251, 252-273, 274-295, 296-317, 318-339, 340-361, 362-383, and 384-405; these read QVTTLQADRLGIKSIDGVEYLN, NLTQINFSNNQLTDITPLKNLT, KLVDILMNNNQIADITPLANLT, NLTGLTLFNNQITDIDPLKNLT, NLNRLELSSNTISDISALSGLT, SLQQLSFGNQVTDLKPLANLT, TLERLDISSNKVSDISVLAKLT, NLESLIATNNQISDITPLGILT, NLDELSLNGNQLKDIGTLASLT, NLTDLDLANNQISNLAPLSGLT, KLTELKLGANQISNISPLAGLT, ALTNLELNENQLEDISPISNLK, NLTYLTLYFNNISDISPVSSLT, KLQRLFFYNNKVSDVSSLANLT, and NINWLSAGHNQISDLTPLANLT. Positions 416–505 constitute an LRRCT domain; that stretch reads AWTNAPVNYK…AIFNVKFHVD (90 aa). A B-1 repeat occupies 518–587; the sequence is LLTEPAKPVK…TTSQTVDYQG (70 aa). Residues 518–706 form a 3 X approximate tandem repeats, type B region; it reads LLTEPAKPVK…ITLYAQFTKN (189 aa). The stretch at 588-657 is one B-2 repeat; that stretch reads LLQEPTAPTK…STTQAVDYQG (70 aa). The stretch at 658-706 is one B-3 repeat; it reads LLKEPKAPTKAGYTFKGWYDEKTDGKKWDFATDKMPANDITLYAQFTKN. A disordered region spans residues 705–757; it reads KNPVAPPTTGGNTPPTTNNGGNTTPPSANIPGSDTSNTSTGNSASTTSTMNAY. Over residues 711–753 the composition is skewed to low complexity; it reads PTTGGNTPPTTNNGGNTTPPSANIPGSDTSNTSTGNSASTTST. Positions 767-771 match the LPXTG sorting signal motif; the sequence is LPTTG. Thr770 is modified (pentaglycyl murein peptidoglycan amidated threonine). Positions 771 to 800 are cleaved as a propeptide — removed by sortase A; sequence GDSDNALYLLLGLLAVGTAMALTKKARASK.

This sequence belongs to the internalin family. Interacts with host (human) cadherin-1 (CDH1). The formation of the complex between inlA and cadherin-1 is calcium-dependent. Mutagenesis studies show it is possible to increase the affinity of InlA for CDH1 by rational engineering of InlA residues.

It localises to the secreted. Its subcellular location is the cell wall. Bacterial uptake is inhibited by EDTA and by anti-E-cadherin antibodies. Its function is as follows. Mediates the entry of L.monocytogenes into host intestinal epithelial cells; transformation with inlA alone allows L.innocua (a non-invasive species) to be taken up by host cells. Binds to human receptor cadherin-1 (E-cadherin, CDH1); the chicken homolog of cadherin-1 but not cadherin-2 function as receptors. Mouse cadherin-1 is not a receptor, however mutating a single surface-exposed residue (Glu-172 to Pro in mouse) allows cadherin-1 to act as a receptor for InlA. The chain is Internalin A from Listeria monocytogenes serovar 1/2a (strain ATCC BAA-679 / EGD-e).